We begin with the raw amino-acid sequence, 157 residues long: Transmembrane protein 50A (157 aa).

Serine 2 carries the post-translational modification N-acetylserine. Residue serine 2 is modified to Phosphoserine. The next 4 membrane-spanning stretches (helical) occupy residues 26-46, 58-78, 95-115, and 126-146; these read IAAGVLFFTGWWIIIDAAVIY, ACGVIATIAFLMINAVSNGQV, IWLFVGFMLAFGSLIASMWIL, and IVYPGIAVFFQNAFIFFGGLV.

The protein belongs to the UPF0220 family.

It localises to the membrane. This chain is Transmembrane protein 50A (TMEM50A), found in Homo sapiens (Human).